Reading from the N-terminus, the 512-residue chain is MVTLDGSSLTTADAQRVLFDFEEVQASAESMERVKKSRAAVERIVQEEKTIYGITTGFGKFSDVLIQKEDAADLQLNLILSHACGVGDPFPESVSRAMLLLRANALLKGFSGVRTELIDQLLAYLNHRIHPVIPQQGSLGASGDLAPLSHLALALIGQGEVFYEGARMPTAHALEQTNLQPAVLTSKEGLALINGTQAMTAMGLIAYLEAEKLAYQSERIASLTIEGLQGIIDAFDEDIHAARGYQEQMDVAERIRYYLSDSKLTTVQGELRVQDAYSIRCIPQVHGASWQTLAYVKEKLEIEMNAATDNPLIFEDGAKIISGGNFHGQPIAFAMDFLKVAAAELANISERRIERLVNPQLNDLPPFLSPQPGLQSGAMIMQYAAASLVSENKTLAHPASVDSIPSSANQEDHVSMGTIASRHAYQIIANTRRVLAVEAICALQAVEYRGEEHCASYTKQLYHEMRNIVPSIQEDRVFSYDIEHLSDWLKKESFLPNEHHQKLMTNEGGLTR.

Residues 141 to 143 constitute a cross-link (5-imidazolinone (Ala-Gly)); that stretch reads ASG. S142 is modified (2,3-didehydroalanine (Ser)).

Belongs to the PAL/histidase family. Post-translationally, contains an active site 4-methylidene-imidazol-5-one (MIO), which is formed autocatalytically by cyclization and dehydration of residues Ala-Ser-Gly.

The protein resides in the cytoplasm. The enzyme catalyses L-histidine = trans-urocanate + NH4(+). It functions in the pathway amino-acid degradation; L-histidine degradation into L-glutamate; N-formimidoyl-L-glutamate from L-histidine: step 1/3. The protein is Histidine ammonia-lyase of Bacillus velezensis (strain DSM 23117 / BGSC 10A6 / LMG 26770 / FZB42) (Bacillus amyloliquefaciens subsp. plantarum).